We begin with the raw amino-acid sequence, 205 residues long: Large ribosomal subunit protein uL3 (205 aa).

Belongs to the universal ribosomal protein uL3 family. As to quaternary structure, part of the 50S ribosomal subunit. Forms a cluster with proteins L14 and L19.

In terms of biological role, one of the primary rRNA binding proteins, it binds directly near the 3'-end of the 23S rRNA, where it nucleates assembly of the 50S subunit. The polypeptide is Large ribosomal subunit protein uL3 (Parabacteroides distasonis (strain ATCC 8503 / DSM 20701 / CIP 104284 / JCM 5825 / NCTC 11152)).